A 568-amino-acid chain; its full sequence is Sulfite reductase [NADPH] hemoprotein beta-component (568 aa).

Residues Cys-426, Cys-432, Cys-471, and Cys-475 each coordinate [4Fe-4S] cluster. Cys-475 is a siroheme binding site.

The protein belongs to the nitrite and sulfite reductase 4Fe-4S domain family. Alpha(8)-beta(8). The alpha component is a flavoprotein, the beta component is a hemoprotein. It depends on siroheme as a cofactor. [4Fe-4S] cluster serves as cofactor.

It catalyses the reaction hydrogen sulfide + 3 NADP(+) + 3 H2O = sulfite + 3 NADPH + 4 H(+). It participates in sulfur metabolism; hydrogen sulfide biosynthesis; hydrogen sulfide from sulfite (NADPH route): step 1/1. Component of the sulfite reductase complex that catalyzes the 6-electron reduction of sulfite to sulfide. This is one of several activities required for the biosynthesis of L-cysteine from sulfate. The polypeptide is Sulfite reductase [NADPH] hemoprotein beta-component (Xylella fastidiosa (strain M12)).